A 340-amino-acid polypeptide reads, in one-letter code: uncharacterized protein (340 aa).

The next 2 membrane-spanning stretches (helical) occupy residues P162–G182 and F239–P259.

It is found in the cell membrane. This is an uncharacterized protein from Mycobacterium tuberculosis (strain CDC 1551 / Oshkosh).